We begin with the raw amino-acid sequence, 427 residues long: 5'-deoxyadenosine deaminase (427 aa).

Residues histidine 62 and histidine 64 each contribute to the Zn(2+) site. 2 residues coordinate substrate: glutamate 91 and histidine 183. Histidine 210 lines the Zn(2+) pocket. Substrate contacts are provided by glutamate 213 and aspartate 298. Aspartate 298 contacts Zn(2+).

Belongs to the metallo-dependent hydrolases superfamily. MTA/SAH deaminase family. In terms of assembly, homotetramer. Zn(2+) serves as cofactor.

The catalysed reaction is 5'-deoxyadenosine + H2O + H(+) = 5'-deoxyinosine + NH4(+). It carries out the reaction S-adenosyl-L-homocysteine + H2O + H(+) = S-inosyl-L-homocysteine + NH4(+). The enzyme catalyses S-methyl-5'-thioadenosine + H2O + H(+) = S-methyl-5'-thioinosine + NH4(+). It catalyses the reaction adenosine + H2O + H(+) = inosine + NH4(+). Its pathway is amino-acid biosynthesis; S-adenosyl-L-methionine biosynthesis. In terms of biological role, catalyzes the deamination of three SAM-derived enzymatic products, namely 5'-deoxyadenosine, S-adenosyl-L-homocysteine, and 5'-methylthioadenosine, to produce the inosine analogs. Can also deaminate adenosine. The preferred substrate for this enzyme is 5'-deoxyadenosine, but all these substrates are efficiently deaminated. Likely functions in a S-adenosyl-L-methionine (SAM) recycling pathway from S-adenosyl-L-homocysteine (SAH) produced from SAM-dependent methylation reactions. May also be involved in the recycling of 5'-deoxyadenosine, whereupon the 5'-deoxyribose moiety of 5'-deoxyinosine is further metabolized to deoxyhexoses used for the biosynthesis of aromatic amino acids in methanogens. This chain is 5'-deoxyadenosine deaminase, found in Methanothermobacter thermautotrophicus (strain ATCC 29096 / DSM 1053 / JCM 10044 / NBRC 100330 / Delta H) (Methanobacterium thermoautotrophicum).